The sequence spans 298 residues: Baseplate tube protein p140 (298 aa).

Homotrimer. Forms a pseudo-hexameric ring. Interacts with collar protein p132, DTP-pb9 and tail tube protein pb6.

Its subcellular location is the virion. Forms the simplified baseplate, together with the p132 collar protein ring and the cone (DTP-pb9 and BHP-pb3). The sequence is that of Baseplate tube protein p140 from Escherichia phage T5 (Enterobacteria phage T5).